Reading from the N-terminus, the 640-residue chain is MPIITLPNGDQKSFDHPVSVMEVAQSIGPGLAKNTVAGRVNDRLVDACDLITEDSTLQIITPKDEEGLEIIRHSCAHLVGHAVKQLFPEAKMVIGPVIEEGFYYDIWMPRPFTLDDMAAIEERMKKLIDQDYDVIKKMTPRDEVIKVFTDRGEEYKLRLVEDMPEEKAMGLYYHQEYVDMCRGPHVPNTKFLKSFKLTKISGAYWRGDAKNEQLQRIYGTAWADKKQLAAYIKRIEEAEKRDHRKIGKALDLFHMQEEAPGMVFWHANGWTIYQVLEQYMRKVQQDNGYQEIKTPQIVDFTLWEKSGHAANYVENMFTTHSESRNYAVKPMNCPCHVQVFNQGLKSYRDLPIRLAEFGSCHRNEPSGSLHGIMRVRGFTQDDAHIFCTKEQIGKEVADFIKLTLDVYKDFGFEEVQMKLSTRPEKRVGDDALWDLAEKSLADALDAAGLEWELQPGEGAFYGPKIEFSLKDCLGRVWQCGTIQCDFNLPVRLDASYVTEENERDQPVMLHRAILGSFERFIGILIEHYAGFMPPWLSPVQACVMNITDSQAEASEQVVAKLKENGLRAISDLRNEKIGFKIRERTLERIPYLLVLGDREVEEGTVNVRTRSGKNLGTMSVDAFIDLVKSAVAERGRYIVE.

Positions 1-61 (MPIITLPNGD…TEDSTLQIIT (61 aa)) constitute a TGS domain. Positions 242-533 (DHRKIGKALD…LIEHYAGFMP (292 aa)) are catalytic. Positions 333, 384, and 510 each coordinate Zn(2+).

Belongs to the class-II aminoacyl-tRNA synthetase family. As to quaternary structure, homodimer. It depends on Zn(2+) as a cofactor.

It localises to the cytoplasm. It catalyses the reaction tRNA(Thr) + L-threonine + ATP = L-threonyl-tRNA(Thr) + AMP + diphosphate + H(+). In terms of biological role, catalyzes the attachment of threonine to tRNA(Thr) in a two-step reaction: L-threonine is first activated by ATP to form Thr-AMP and then transferred to the acceptor end of tRNA(Thr). Also edits incorrectly charged L-seryl-tRNA(Thr). In Acinetobacter baumannii (strain AB0057), this protein is Threonine--tRNA ligase.